The primary structure comprises 270 residues: Acyl-[acyl-carrier-protein]--UDP-N-acetylglucosamine O-acyltransferase (270 aa).

Substrate contacts are provided by residues 69–72 (QDLK), H121, H140, and Q157.

It belongs to the transferase hexapeptide repeat family. LpxA subfamily. As to quaternary structure, homotrimer.

It localises to the cytoplasm. The enzyme catalyses a (3R)-hydroxyacyl-[ACP] + UDP-N-acetyl-alpha-D-glucosamine = a UDP-3-O-[(3R)-3-hydroxyacyl]-N-acetyl-alpha-D-glucosamine + holo-[ACP]. Its pathway is glycolipid biosynthesis; lipid IV(A) biosynthesis; lipid IV(A) from (3R)-3-hydroxytetradecanoyl-[acyl-carrier-protein] and UDP-N-acetyl-alpha-D-glucosamine: step 1/6. Involved in the biosynthesis of lipid A, a phosphorylated glycolipid that anchors the lipopolysaccharide to the outer membrane of the cell. This chain is Acyl-[acyl-carrier-protein]--UDP-N-acetylglucosamine O-acyltransferase, found in Helicobacter pylori (strain ATCC 700392 / 26695) (Campylobacter pylori).